The primary structure comprises 67 residues: uncharacterized protein (67 aa).

To E.coli YbdD.

This is an uncharacterized protein from Escherichia coli O157:H7.